A 364-amino-acid polypeptide reads, in one-letter code: Mannose-1-phosphate guanyltransferase (364 aa).

This sequence belongs to the transferase hexapeptide repeat family.

It is found in the cytoplasm. It catalyses the reaction alpha-D-mannose 1-phosphate + GTP + H(+) = GDP-alpha-D-mannose + diphosphate. It participates in nucleotide-sugar biosynthesis; GDP-alpha-D-mannose biosynthesis; GDP-alpha-D-mannose from alpha-D-mannose 1-phosphate (GTP route): step 1/1. Involved in cell wall synthesis where it is required for glycosylation. Involved in cell cycle progression through cell-size checkpoint. This chain is Mannose-1-phosphate guanyltransferase (mpg1), found in Aspergillus fumigatus (strain ATCC MYA-4609 / CBS 101355 / FGSC A1100 / Af293) (Neosartorya fumigata).